The following is a 670-amino-acid chain: RxLR effector protein PSR2 (670 aa).

The signal sequence occupies residues 1–17; sequence MRLQCVVLFAALTLVAA. The RxLR-dEER signature appears at 39–54; it reads RLLRPGNPAGKEDEER. Asparagine 57 carries an N-linked (GlcNAc...) asparagine glycan. A WY1 repeat occupies 79–126; it reads KLLKWADAKKPPETVFTRLRLDKTGTQLFDNTDFPVWAAYTRSVAQTD. The segment at 79–670 is 7 X 93 AA tandem repeats; sequence KLLKWADAKK…YSAKFKVRWG (592 aa). An LWY2 repeat occupies 127–217; the sequence is SEASAVMLKT…NYMKLSNKEN (91 aa). The stretch at 218–308 is one LWY3 repeat; it reads PKAQTTLIAT…KYINYYNKEN (91 aa). Residues 309 to 399 form an LWY4 repeat; the sequence is PDEKTTVLAK…KYTENFNLNK (91 aa). One copy of the LWY5 repeat lies at 400–492; the sequence is EINEQVTAIQ…KFLEKYNTAN (93 aa). The stretch at 493–583 is one LWY6 repeat; that stretch reads PGKEQTMISG…KYLNAFNDKA (91 aa). An LWY7 repeat occupies 584 to 670; that stretch reads PVKKALMIDT…YSAKFKVRWG (87 aa).

The protein belongs to the RxLR effector family. Interacts with host dsRNA-binding protein DRB4.

The protein resides in the secreted. It localises to the host cell. In terms of biological role, secreted effector that possesses RNA silencing suppression activity by inhibiting the biogenesis of small RNAs in the host plant to promote enhanced susceptibility of host to the pathogen during infection. Interferes with secondary siRNA production by associating with host dsRNA-binding protein DRB4. Inhibits the host salicylic acid pathway during infection. The sequence is that of RxLR effector protein PSR2 from Phytophthora sojae (Soybean stem and root rot agent).